The sequence spans 198 residues: Recombination protein RecR (198 aa).

The C4-type zinc finger occupies 57–72; it reads CTVCGHITDTDPCYIC. Positions 80–175 constitute a Toprim domain; it reads TTICVVQDPK…KVTRIAHGLP (96 aa).

Belongs to the RecR family.

May play a role in DNA repair. It seems to be involved in an RecBC-independent recombinational process of DNA repair. It may act with RecF and RecO. This is Recombination protein RecR from Geobacillus sp. (strain WCH70).